The primary structure comprises 427 residues: Protein phosphatase methylesterase 1 (427 aa).

The interval 1 to 49 (MSELQKSFAKAKLAKLPPEAPPFSMHPPRDEDDSESASSTGTVVPSPSR) is disordered. The segment covering 36-49 (SASSTGTVVPSPSR) has biased composition (polar residues). Residues Ser207, Asp233, and His364 contribute to the active site. Residues 402 to 427 (SAAMKQGAEAGAVPPFGRGQGSSHKP) are disordered.

This sequence belongs to the AB hydrolase superfamily.

It carries out the reaction [phosphatase 2A protein]-C-terminal L-leucine methyl ester + H2O = [phosphatase 2A protein]-C-terminal L-leucine + methanol + H(+). Demethylates proteins that have been reversibly carboxymethylated. Demethylates the phosphatase PP2A catalytic subunit. The chain is Protein phosphatase methylesterase 1 (ppe1) from Aspergillus oryzae (strain ATCC 42149 / RIB 40) (Yellow koji mold).